Consider the following 384-residue polypeptide: Monomethylxanthine methyltransferase 2 (384 aa).

Residues Tyr-18, Cys-61, Asn-66, Asp-100, Leu-101, Ser-139, Phe-140, and Cys-156 each coordinate S-adenosyl-L-homocysteine. Positions 157, 160, and 161 each coordinate theobromine. The Mg(2+) site is built by Asn-178, Phe-262, and Asn-263. Tyr-368 provides a ligand contact to theobromine.

It belongs to the methyltransferase superfamily. Type-7 methyltransferase family. The cofactor is Mg(2+). As to expression, expressed, at low levels, in young leaves, floral buds and immature fruits (grains), but not in old leaves and mature fruits. Highly expressed in developing endosperm and flower buds. Detected in young leaves.

The catalysed reaction is 7-methylxanthine + S-adenosyl-L-methionine = theobromine + S-adenosyl-L-homocysteine + H(+). The protein operates within alkaloid biosynthesis. Involved in the biosynthesis of caffeine. Catalyzes the conversion of 7-methylxanthine (7mX) to theobromine and with a lower activity of paraxanthine to caffeine. Does not have 1-N-methylation activity. This chain is Monomethylxanthine methyltransferase 2, found in Coffea arabica (Arabian coffee).